A 106-amino-acid polypeptide reads, in one-letter code: Glutaredoxin-1 (106 aa).

A1 bears the N-acetylalanine mark. Residues Q2–R105 enclose the Glutaredoxin domain. K8 is modified (N6-succinyllysine). 2 disulfide bridges follow: C22–C25 and C78–C82.

Belongs to the glutaredoxin family.

The protein localises to the cytoplasm. Its function is as follows. Has a glutathione-disulfide oxidoreductase activity in the presence of NADPH and glutathione reductase. Reduces low molecular weight disulfides and proteins. This is Glutaredoxin-1 (GLRX) from Oryctolagus cuniculus (Rabbit).